The chain runs to 403 residues: Argininosuccinate synthase (403 aa).

ATP is bound by residues 10-18 and Ala-37; that span reads AYSGGLDTS. Tyr-89 provides a ligand contact to L-citrulline. Gly-119 is a binding site for ATP. L-aspartate contacts are provided by Thr-121, Asn-125, and Asp-126. Asn-125 provides a ligand contact to L-citrulline. L-citrulline contacts are provided by Arg-129, Ser-178, Ser-187, Glu-263, and Tyr-275.

It belongs to the argininosuccinate synthase family. Type 1 subfamily. As to quaternary structure, homotetramer.

Its subcellular location is the cytoplasm. The catalysed reaction is L-citrulline + L-aspartate + ATP = 2-(N(omega)-L-arginino)succinate + AMP + diphosphate + H(+). The protein operates within amino-acid biosynthesis; L-arginine biosynthesis; L-arginine from L-ornithine and carbamoyl phosphate: step 2/3. The protein is Argininosuccinate synthase of Idiomarina loihiensis (strain ATCC BAA-735 / DSM 15497 / L2-TR).